The chain runs to 309 residues: Ribonuclease Z (309 aa).

Zn(2+)-binding residues include H63, H65, D67, H68, H145, D216, and H274. The Proton acceptor role is filled by D67.

Belongs to the RNase Z family. As to quaternary structure, homodimer. Zn(2+) is required as a cofactor.

The enzyme catalyses Endonucleolytic cleavage of RNA, removing extra 3' nucleotides from tRNA precursor, generating 3' termini of tRNAs. A 3'-hydroxy group is left at the tRNA terminus and a 5'-phosphoryl group is left at the trailer molecule.. Zinc phosphodiesterase, which displays some tRNA 3'-processing endonuclease activity. Probably involved in tRNA maturation, by removing a 3'-trailer from precursor tRNA. In Streptococcus suis (strain 98HAH33), this protein is Ribonuclease Z.